Consider the following 94-residue polypeptide: Co-chaperonin GroES (94 aa).

This sequence belongs to the GroES chaperonin family. As to quaternary structure, heptamer of 7 subunits arranged in a ring. Interacts with the chaperonin GroEL.

The protein localises to the cytoplasm. In terms of biological role, together with the chaperonin GroEL, plays an essential role in assisting protein folding. The GroEL-GroES system forms a nano-cage that allows encapsulation of the non-native substrate proteins and provides a physical environment optimized to promote and accelerate protein folding. GroES binds to the apical surface of the GroEL ring, thereby capping the opening of the GroEL channel. This chain is Co-chaperonin GroES, found in Bacillus licheniformis (strain ATCC 14580 / DSM 13 / JCM 2505 / CCUG 7422 / NBRC 12200 / NCIMB 9375 / NCTC 10341 / NRRL NRS-1264 / Gibson 46).